A 356-amino-acid chain; its full sequence is Tyrosine recombinase XerS (356 aa).

The Core-binding (CB) domain maps to 16–121 (IMPWYVLDYY…ALSSLYKYLT (106 aa)). The 186-residue stretch at 169–354 (AFLDYVDKEY…VNDEQKNALD (186 aa)) folds into the Tyr recombinase domain. Residues Arg210, Lys234, His306, Arg309, and His332 contribute to the active site. The O-(3'-phospho-DNA)-tyrosine intermediate role is filled by Tyr341.

The protein belongs to the 'phage' integrase family. XerS subfamily.

The protein localises to the cytoplasm. With respect to regulation, ftsK is required for recombination. Functionally, site-specific tyrosine recombinase, which acts by catalyzing the cutting and rejoining of the recombining DNA molecules. Essential to convert dimers of the bacterial chromosome into monomers to permit their segregation at cell division. The polypeptide is Tyrosine recombinase XerS (Streptococcus pyogenes serotype M6 (strain ATCC BAA-946 / MGAS10394)).